A 668-amino-acid polypeptide reads, in one-letter code: Protein IQ-DOMAIN 14 (668 aa).

A calmodulin-binding region spans residues 1–11 (MVKKGSWFSAI). Disordered regions lie at residues 16 to 54 (TPHSKEKLANEPERKSGKEKKKKGFGKLRHGETNSFLPI) and 66 to 305 (GEAE…PRAV). A compositionally biased stretch (basic and acidic residues) spans 18 to 31 (HSKEKLANEPERKS). Positions 32–43 (GKEKKKKGFGKL) are enriched in basic residues. The segment covering 78-96 (PPTPDRPNPYSASPPPRPA) has biased composition (pro residues). Composition is skewed to low complexity over residues 97-120 (SPRVASPRPTSPRVASPRVPSPRA) and 166-175 (PSSASANAPP). Over residues 269-279 (PTTPKPPSPRS) the composition is skewed to pro residues. 2 consecutive IQ domains span residues 321–350 (QHASATKIQGAFRGYMARKSFRALKGLVRL) and 343–372 (ALKGLVRLQGVVRGYSVKRQTINAMKYMQQ). Disordered stretches follow at residues 399-431 (AKWAASEAGNDNWDDSVLTKEERDSRSQRKTDA) and 476-561 (SPAP…SLTS). Positions 415–431 (VLTKEERDSRSQRKTDA) are enriched in basic and acidic residues. The segment covering 516-529 (DTSTPRSSRSTFHT) has biased composition (polar residues).

This sequence belongs to the IQD family. In terms of assembly, binds to multiple calmodulin (CaM) in the presence of Ca(2+) and CaM-like proteins. In terms of tissue distribution, expressed in hypocotyls, cotyledons, leaves and petioles.

Its subcellular location is the cell membrane. It is found in the cytoplasm. The protein localises to the cytoskeleton. May be involved in cooperative interactions with calmodulins or calmodulin-like proteins. Recruits calmodulin proteins to microtubules, thus being a potential scaffold in cellular signaling and trafficking. Regulates cell and organ shapes (prevents twisting) in aerial parts probably by regulating transverse microtubules (MT) arrays alignment. Regulates the formation of oval xylem secondary cell-wall deposition pits through microtubule-dependent lateral inhibition of Rho GTPase domains, thus confining the area of active ROP domains within the lattice of the cortical microtubules. May associate with nucleic acids and regulate gene expression at the transcriptional or post-transcriptional level. The polypeptide is Protein IQ-DOMAIN 14 (Arabidopsis thaliana (Mouse-ear cress)).